Reading from the N-terminus, the 138-residue chain is Lymphocyte antigen 6L (138 aa).

The N-terminal stretch at 1–16 is a signal peptide; sequence MERLVLTLCTLPLAVA. Residue Asn-27 is glycosylated (N-linked (GlcNAc...) asparagine). One can recognise a UPAR/Ly6 domain in the interval 28–122; it reads LSCYQCFKVS…TPQEGRWALR (95 aa). Intrachain disulfides connect Cys-30-Cys-47 and Cys-103-Cys-108. A lipid anchor (GPI-anchor amidated glycine) is attached at Gly-117. Residues 118-138 constitute a propeptide, removed in mature form; sequence RWALRGGLLLQVGLSLLRALL.

It localises to the cell membrane. In Homo sapiens (Human), this protein is Lymphocyte antigen 6L.